Here is a 230-residue protein sequence, read N- to C-terminus: Dephospho-CoA kinase (230 aa).

Residues 1-20 (MSKYAAIPSPYSHQPQAPDH) are disordered. One can recognise a DPCK domain in the interval 26-225 (VVGLTGGIGS…QDYLKLAQQL (200 aa)). Residue 34 to 39 (GSGKSA) participates in ATP binding.

The protein belongs to the CoaE family.

The protein localises to the cytoplasm. The catalysed reaction is 3'-dephospho-CoA + ATP = ADP + CoA + H(+). Its pathway is cofactor biosynthesis; coenzyme A biosynthesis; CoA from (R)-pantothenate: step 5/5. In terms of biological role, catalyzes the phosphorylation of the 3'-hydroxyl group of dephosphocoenzyme A to form coenzyme A. The sequence is that of Dephospho-CoA kinase from Psychrobacter arcticus (strain DSM 17307 / VKM B-2377 / 273-4).